Consider the following 157-residue polypeptide: Phosphopantetheine adenylyltransferase (157 aa).

Residue serine 8 participates in substrate binding. ATP-binding positions include 8–9 (SF) and histidine 16. 3 residues coordinate substrate: lysine 40, threonine 72, and arginine 86. ATP is bound by residues 87 to 89 (GLR), glutamate 97, and 122 to 128 (FSFLSSS).

Belongs to the bacterial CoaD family. Homohexamer. Mg(2+) serves as cofactor.

The protein resides in the cytoplasm. It catalyses the reaction (R)-4'-phosphopantetheine + ATP + H(+) = 3'-dephospho-CoA + diphosphate. It functions in the pathway cofactor biosynthesis; coenzyme A biosynthesis; CoA from (R)-pantothenate: step 4/5. Its function is as follows. Reversibly transfers an adenylyl group from ATP to 4'-phosphopantetheine, yielding dephospho-CoA (dPCoA) and pyrophosphate. The polypeptide is Phosphopantetheine adenylyltransferase (Prochlorococcus marinus (strain MIT 9211)).